We begin with the raw amino-acid sequence, 214 residues long: Putative 3-methyladenine DNA glycosylase (214 aa).

The protein belongs to the DNA glycosylase MPG family.

This Gloeobacter violaceus (strain ATCC 29082 / PCC 7421) protein is Putative 3-methyladenine DNA glycosylase.